The sequence spans 458 residues: MGSKTPERDGHKGQENTTGPVECPLGGMPRGMHLATDGDGTIGDSGDDDDGEAHSTALINANANGNQKKKRKSKKKGKKKAAKQSSPPRVPLSQLFLQGKYPIGEVQEYQPNVENTSRTTAEEVRYKSRSHLEDDSFLNDYRKAAEVHRQVRKWTQERVKPGQGLMEIAEDIDDGVRALLGHAGLEPGDSLKAGLGFPTGLSLNNVVAHYTPNPGQKDIILQSSDVMKVDFGVHINGWIVDSAFTMTFDPVYDNLLAAVKDATNAGLKTAGIDVRISDVSAAIQEAMESYEVEIGGKTFPVKAVRNITGHNIKHYQIHGGKSVPFVKNSDQTKMEEGEIFAIETFGSTGRGYIYDDVGVYGYGKSYDAPRQVSLPLASARSLYKTINENFGTIVFCRRYLDRLGLQRYLAGMNTLVQHGVVDVYAPLVDIKGSYSAQFEHTVLLRESNKEVISRGDDY.

Residues 1–14 (MGSKTPERDGHKGQ) show a composition bias toward basic and acidic residues. A disordered region spans residues 1 to 93 (MGSKTPERDG…QSSPPRVPLS (93 aa)). The span at 67 to 82 (QKKKRKSKKKGKKKAA) shows a compositional bias: basic residues. His209 contributes to the substrate binding site. Positions 230, 241, and 310 each coordinate a divalent metal cation. His318 contacts substrate. Residues Glu343 and Glu439 each contribute to the a divalent metal cation site.

It belongs to the peptidase M24A family. Methionine aminopeptidase eukaryotic type 2 subfamily. Requires Co(2+) as cofactor. Zn(2+) serves as cofactor. It depends on Mn(2+) as a cofactor. Fe(2+) is required as a cofactor.

It localises to the cytoplasm. The enzyme catalyses Release of N-terminal amino acids, preferentially methionine, from peptides and arylamides.. Its function is as follows. Cotranslationally removes the N-terminal methionine from nascent proteins. The N-terminal methionine is often cleaved when the second residue in the primary sequence is small and uncharged (Met-Ala-, Cys, Gly, Pro, Ser, Thr, or Val). The sequence is that of Methionine aminopeptidase 2-2 from Emericella nidulans (strain FGSC A4 / ATCC 38163 / CBS 112.46 / NRRL 194 / M139) (Aspergillus nidulans).